Here is a 230-residue protein sequence, read N- to C-terminus: uncharacterized protein (230 aa).

The chain crosses the membrane as a helical span at residues 19 to 39 (GIFQVLLQLVLAMMTVWDFAG). Asn41 carries N-linked (GlcNAc...) asparagine; by host glycosylation. The helical transmembrane segment at 55-75 (SFLLVLYTGLKQILEYMFSIC) threads the bilayer. N-linked (GlcNAc...) asparagine; by host glycans are attached at residues Asn86, Asn157, Asn168, and Asn182. Residues 172–196 (TNLHKYQNDENDTEEDSEDIEKNSD) adopt a coiled-coil conformation. The tract at residues 178–205 (QNDENDTEEDSEDIEKNSDPKENSDIDS) is disordered. The segment covering 180–190 (DENDTEEDSED) has biased composition (acidic residues). Positions 191–201 (IEKNSDPKENS) are enriched in basic and acidic residues.

The protein resides in the membrane. This is an uncharacterized protein from Acanthamoeba polyphaga mimivirus (APMV).